The chain runs to 376 residues: MSYTTFSKKKNNQLKEPMFFGQSVNIARYDQQKYNIFEKLIEKQLSFFWRPEEIDLSKDRIDFDNLPSNEKHIFISNLKYQTLLDSIQGRSPNIAFLPIVSIPELETWIETWSFSETIHSRSYTHIIRNIINNPSIVFDDIISNKNINDRAQDISIYYDELIRITAYWHLLGEGNHKINEKKVEINLKLLKRRLYLCLISVNVLEAIRFYVSFACSFAFAEREIMEGNAKIIRLIARDEALHLTGTQHILNILNNEKNNENMKNTVLECREEAIKIFISASEQEKKWAKYLFQDGSMLGLNKDILCQYIEYITNIRMHAIGFKMPFEKTSNPIPWINSWLNSDYIQAAPQETEISSYLVGQIESEISNQEFKNFKL.

Fe cation-binding residues include Asp85, Glu116, and His119. Tyr123 is a catalytic residue. The Fe cation site is built by Glu205, Glu239, and His242.

The protein belongs to the ribonucleoside diphosphate reductase small chain family. In terms of assembly, tetramer of two alpha and two beta subunits. It depends on Fe cation as a cofactor.

The enzyme catalyses a 2'-deoxyribonucleoside 5'-diphosphate + [thioredoxin]-disulfide + H2O = a ribonucleoside 5'-diphosphate + [thioredoxin]-dithiol. Provides the precursors necessary for DNA synthesis. Catalyzes the biosynthesis of deoxyribonucleotides from the corresponding ribonucleotides. This Buchnera aphidicola subsp. Schizaphis graminum (strain Sg) protein is Ribonucleoside-diphosphate reductase subunit beta (nrdB).